The chain runs to 204 residues: 3-isopropylmalate dehydratase small subunit (204 aa).

This sequence belongs to the LeuD family. LeuD type 1 subfamily. In terms of assembly, heterodimer of LeuC and LeuD.

It catalyses the reaction (2R,3S)-3-isopropylmalate = (2S)-2-isopropylmalate. It functions in the pathway amino-acid biosynthesis; L-leucine biosynthesis; L-leucine from 3-methyl-2-oxobutanoate: step 2/4. In terms of biological role, catalyzes the isomerization between 2-isopropylmalate and 3-isopropylmalate, via the formation of 2-isopropylmaleate. The chain is 3-isopropylmalate dehydratase small subunit from Vesicomyosocius okutanii subsp. Calyptogena okutanii (strain HA).